Here is a 109-residue protein sequence, read N- to C-terminus: Thioredoxin 2 (109 aa).

The region spanning 2 to 109 (SGKYFEATDQ…IAKKLDEHIG (108 aa)) is the Thioredoxin domain. A disulfide bridge links Cys-33 with Cys-36.

The protein belongs to the thioredoxin family.

Functionally, participates in various redox reactions through the reversible oxidation of its active center dithiol to a disulfide and catalyzes dithiol-disulfide exchange reactions. This chain is Thioredoxin 2 (trx2), found in Chlorobaculum tepidum (strain ATCC 49652 / DSM 12025 / NBRC 103806 / TLS) (Chlorobium tepidum).